The chain runs to 335 residues: Holliday junction branch migration complex subunit RuvB (335 aa).

Positions 4-184 are large ATPase domain (RuvB-L); sequence ADRLIDATEK…FGIVQRLEFY (181 aa). ATP is bound by residues isoleucine 23, arginine 24, glycine 65, lysine 68, threonine 69, threonine 70, 131 to 133, arginine 174, tyrosine 184, and arginine 221; that span reads EDY. Mg(2+) is bound at residue threonine 69. Residues 185-255 form a small ATPAse domain (RuvB-S) region; that stretch reads SVEDLSYIVG…VAELALNMID (71 aa). A head domain (RuvB-H) region spans residues 258 to 335; sequence KSGFDYMDRK…HHFGLLPKQD (78 aa). DNA-binding residues include arginine 313 and arginine 318.

The protein belongs to the RuvB family. As to quaternary structure, homohexamer. Forms an RuvA(8)-RuvB(12)-Holliday junction (HJ) complex. HJ DNA is sandwiched between 2 RuvA tetramers; dsDNA enters through RuvA and exits via RuvB. An RuvB hexamer assembles on each DNA strand where it exits the tetramer. Each RuvB hexamer is contacted by two RuvA subunits (via domain III) on 2 adjacent RuvB subunits; this complex drives branch migration. In the full resolvosome a probable DNA-RuvA(4)-RuvB(12)-RuvC(2) complex forms which resolves the HJ.

It localises to the cytoplasm. It carries out the reaction ATP + H2O = ADP + phosphate + H(+). Its function is as follows. The RuvA-RuvB-RuvC complex processes Holliday junction (HJ) DNA during genetic recombination and DNA repair, while the RuvA-RuvB complex plays an important role in the rescue of blocked DNA replication forks via replication fork reversal (RFR). RuvA specifically binds to HJ cruciform DNA, conferring on it an open structure. The RuvB hexamer acts as an ATP-dependent pump, pulling dsDNA into and through the RuvAB complex. RuvB forms 2 homohexamers on either side of HJ DNA bound by 1 or 2 RuvA tetramers; 4 subunits per hexamer contact DNA at a time. Coordinated motions by a converter formed by DNA-disengaged RuvB subunits stimulates ATP hydrolysis and nucleotide exchange. Immobilization of the converter enables RuvB to convert the ATP-contained energy into a lever motion, pulling 2 nucleotides of DNA out of the RuvA tetramer per ATP hydrolyzed, thus driving DNA branch migration. The RuvB motors rotate together with the DNA substrate, which together with the progressing nucleotide cycle form the mechanistic basis for DNA recombination by continuous HJ branch migration. Branch migration allows RuvC to scan DNA until it finds its consensus sequence, where it cleaves and resolves cruciform DNA. This chain is Holliday junction branch migration complex subunit RuvB, found in Pseudoalteromonas translucida (strain TAC 125).